Consider the following 94-residue polypeptide: Small ribosomal subunit protein bS6 (94 aa).

This sequence belongs to the bacterial ribosomal protein bS6 family.

Binds together with bS18 to 16S ribosomal RNA. The chain is Small ribosomal subunit protein bS6 from Desulforudis audaxviator (strain MP104C).